Here is a 765-residue protein sequence, read N- to C-terminus: MASHIVGYPRMGPKRELKFALESFWDKKSSAEDLQKVAADLRSSIWKQMADAGIKYIPSNTFSYYDQVLDTATMLGAVPPRYNFAGGEIGFDTYFSMARGNASVPAMEMTKWFDTNYHYIVPELGPEVNFSYASHKAVNEYKEAKELGVDTVPVLVGPVTFLLLSKPAKGVEKTFPLLSLLDKILPVYKEVIGELKAAGASWIQFDEPTLVLDLESHQLEAFTKAYSELESTLSGLNVIVETYFADIPAETYKILTALKGVTGFGFDLVRGAKTLDLIKGGFPSGKYLFAGVVDGRNIWANDLAASLSTLQSLEGIVGKDKLVVSTSCSLLHTAVDLVNEPKLDKEIKSWLAFAAQKVVEVNALAKALAGEKDEAFFSENAAAQASRKSSPRVTNQAVQKAAAALRGSDHRRATTVSARLDAQQKKLNLPVLPTTTIGSFPQTLELRRVRREYKAKKISEDDYVKAIKEEISKVVKLQEELDIDVLVHGEPERNDMVEYFGEQLSGFAFTANGWVQSYGSRCVKPPIIYGDVSRPNPMTVFWSQTAQSMTKRPMKGMLTGPVTILNWSFVRNDQPRFETCYQIALAIKDEVEDLEKAGINVIQIDEAALREGLPLRKAEHAFYLDWAVHSFRITNLPLQDTTQIHTHMCYSNFNDIIHSIIDMDADVMTIENSRSSEKLLSVFREGVKYGAGIGPGVYDIHSPRIPSTEEIADRINKMLAVLDTNILWVNPDCGLKTRKYAEVKPALENMVSAAKLIRTQLASAK.

Positions 18 and 116 each coordinate 5-methyltetrahydropteroyltri-L-glutamate. L-homocysteine contacts are provided by residues 437–439 (IGS) and glutamate 490. L-methionine is bound by residues 437-439 (IGS) and glutamate 490. 5-methyltetrahydropteroyltri-L-glutamate contacts are provided by residues aspartate 495, tyrosine 518, 521-522 (RC), and tryptophan 567. Aspartate 605 provides a ligand contact to L-homocysteine. Aspartate 605 contributes to the L-methionine binding site. 5 residues coordinate Zn(2+): histidine 647, cysteine 649, histidine 658, aspartate 662, and glutamate 671. Catalysis depends on histidine 701, which acts as the Proton donor. Position 733 (cysteine 733) interacts with Zn(2+).

The protein belongs to the vitamin-B12 independent methionine synthase family. It depends on Zn(2+) as a cofactor.

It is found in the cytoplasm. The catalysed reaction is 5-methyltetrahydropteroyltri-L-glutamate + L-homocysteine = tetrahydropteroyltri-L-glutamate + L-methionine. The protein operates within amino-acid biosynthesis; L-methionine biosynthesis via de novo pathway; L-methionine from L-homocysteine (MetE route): step 1/1. Catalyzes the transfer of a methyl group from 5-methyltetrahydrofolate to homocysteine resulting in methionine formation. The polypeptide is 5-methyltetrahydropteroyltriglutamate--homocysteine methyltransferase (METE) (Catharanthus roseus (Madagascar periwinkle)).